We begin with the raw amino-acid sequence, 404 residues long: MFKINDNYLKLPGSYLFSTIGKKVAAYQQANPDKEIIRLGIGDVTQPLAPAVIDALHKSVDEMGHAETFHGYAPDLGYEFLRSAIADHDYKKRGCDISADEIFVSDGAKSDSGNIGDIFSVDNKIAVCDPVYPVYVDTNAMAGRTGDYIPEKQAWSNVVYMPCTAETNFAPELPKETPDIIYLCFPNNPTGSTITKDELQKWVDYANKVGAVIIYDAAYEAYISEPDVPHTIYECEGARTCAIELRSFSKNAGFTGVRLGFTVIPKDLKCGDVTLHSLWARRHGTKFNGAPYIVQRAGEAVYSEAGQKQTGEQIAYYMNNAKTILEGLKSAGYTVSGGVNAPYIWLKTPDKMTSWEFFDYLLEKANVVGTPGSGFGPSGEGYFRLTAFGSYENTVKALERIKAL.

Substrate contacts are provided by tyrosine 15 and glycine 42. Pyridoxal 5'-phosphate-binding positions include tyrosine 72, alanine 108–lysine 109, tyrosine 132, asparagine 188, tyrosine 219, and serine 247–serine 249. Residues lysine 109, tyrosine 132, and asparagine 188 each coordinate substrate. Lysine 250 is modified (N6-(pyridoxal phosphate)lysine). Pyridoxal 5'-phosphate is bound by residues arginine 258 and asparagine 288. Substrate contacts are provided by asparagine 288 and arginine 384.

It belongs to the class-I pyridoxal-phosphate-dependent aminotransferase family. LL-diaminopimelate aminotransferase subfamily. In terms of assembly, homodimer. It depends on pyridoxal 5'-phosphate as a cofactor.

It carries out the reaction (2S,6S)-2,6-diaminopimelate + 2-oxoglutarate = (S)-2,3,4,5-tetrahydrodipicolinate + L-glutamate + H2O + H(+). The protein operates within amino-acid biosynthesis; L-lysine biosynthesis via DAP pathway; LL-2,6-diaminopimelate from (S)-tetrahydrodipicolinate (aminotransferase route): step 1/1. In terms of biological role, involved in the synthesis of meso-diaminopimelate (m-DAP or DL-DAP), required for both lysine and peptidoglycan biosynthesis. Catalyzes the direct conversion of tetrahydrodipicolinate to LL-diaminopimelate. The polypeptide is LL-diaminopimelate aminotransferase (Lachnospira eligens (strain ATCC 27750 / DSM 3376 / VPI C15-48 / C15-B4) (Eubacterium eligens)).